Here is a 349-residue protein sequence, read N- to C-terminus: tRNA pseudouridine synthase D (349 aa).

Phe-27 lines the substrate pocket. The active-site Nucleophile is Asp-80. Residue Asn-129 participates in substrate binding. Residues 155–303 (GVPNYFGAQR…VEAARRAMLL (149 aa)) enclose the TRUD domain. Phe-329 lines the substrate pocket.

The protein belongs to the pseudouridine synthase TruD family.

The catalysed reaction is uridine(13) in tRNA = pseudouridine(13) in tRNA. Functionally, responsible for synthesis of pseudouridine from uracil-13 in transfer RNAs. The polypeptide is tRNA pseudouridine synthase D (Klebsiella pneumoniae subsp. pneumoniae (strain ATCC 700721 / MGH 78578)).